Reading from the N-terminus, the 210-residue chain is Small ribosomal subunit protein bS6 (210 aa).

Residues 99 to 210 (PLPTKRNTKS…KDTKEVKEEG (112 aa)) are disordered. The span at 120 to 210 (NDTKEVKEAK…KDTKEVKEEG (91 aa)) shows a compositional bias: basic and acidic residues.

Belongs to the bacterial ribosomal protein bS6 family.

Its function is as follows. Binds together with bS18 to 16S ribosomal RNA. The protein is Small ribosomal subunit protein bS6 of Prochlorococcus marinus (strain SARG / CCMP1375 / SS120).